Reading from the N-terminus, the 71-residue chain is Brevinin-1SN1 (71 aa).

Positions 1 to 22 are cleaved as a signal peptide; the sequence is MFTMKKPLLLLFFLGTINLSLC. A propeptide spans 23-45 (removed in mature form); that stretch reads EEERNADEEEKRDGDDEMDAEVE. The cysteines at positions 65 and 71 are disulfide-linked.

Belongs to the frog skin active peptide (FSAP) family. Brevinin subfamily. Expressed by the skin glands.

It is found in the secreted. In terms of biological role, antimicrobial peptide. Active against some Gram-negative and a variety of Gram-positive bacterial strains. Active against fungus C.glabrata 090902 but not against C.albicans ATCC 10231. Shows hemolytic activity against human erythrocytes. The protein is Brevinin-1SN1 of Sylvirana spinulosa (Fine-spined frog).